The chain runs to 460 residues: WD repeat-containing protein 41 (460 aa).

WD repeat units lie at residues 40–79 (EAHR…KLLE), 82–128 (GHTQ…QIQR), 131–168 (CFQS…LCKT), 220–258 (DHQD…VQAC), 321–359 (AHDS…QLAA), and 403–441 (GHSS…SGVR).

In terms of assembly, component of the C9orf72-SMCR8 complex, at least composed of C9orf72, SMCR8 and WDR41. The complex is formed of two protomers, each individually consisting of one molecule each of C9orf72, SMCR8 and WDR41. The protomers homodimerize via an interaction between C9orf72 (via C-terminus) and SMCR8 (via N-terminus). Within each protomer SMCR8 (via DENN domain) acts as a bridging protein between WDR41 (via C-terminus and N-terminus) and C9orf72 (via C-terminus). The C9orf72-SMCR8 complex associates with the ULK1/ATG1 kinase complex.

The protein resides in the cytoplasm. Non-catalytic component of the C9orf72-SMCR8 complex, a complex that has guanine nucleotide exchange factor (GEF) activity and regulates autophagy. The C9orf72-SMCR8 complex promotes the exchange of GDP to GTP, converting inactive GDP-bound RAB8A and RAB39B into their active GTP-bound form, thereby promoting autophagosome maturation. As part of the C9orf72-SMCR8 complex, stimulates RAB8A and RAB11A GTPase activity in vitro, however WDR42 is shown not be an essential complex component for this function. The C9orf72-SMCR8 complex also acts as a negative regulator of autophagy initiation by interacting with the ULK1/ATG1 kinase complex and inhibiting its protein kinase activity. In Mus musculus (Mouse), this protein is WD repeat-containing protein 41.